The primary structure comprises 223 residues: UPF0319 protein VPA1584 (223 aa).

Positions 1–21 are cleaved as a signal peptide; it reads MKLIKPLTCALALAMSGMAFA.

This sequence belongs to the UPF0319 family.

This is UPF0319 protein VPA1584 from Vibrio parahaemolyticus serotype O3:K6 (strain RIMD 2210633).